Consider the following 254-residue polypeptide: Small ribosomal subunit protein uS2 (254 aa).

This sequence belongs to the universal ribosomal protein uS2 family.

This chain is Small ribosomal subunit protein uS2, found in Borrelia recurrentis (strain A1).